Reading from the N-terminus, the 486-residue chain is GTPase Obg (486 aa).

The region spanning 2–159 (SRFIDRVVLH…RELVLELKSV (158 aa)) is the Obg domain. One can recognise an OBG-type G domain in the interval 160–340 (ADVGLVGFPS…LTFALAKLVA (181 aa)). GTP-binding positions include 166–173 (GFPSAGKS), 191–195 (FTTLV), 212–215 (DVPG), 292–295 (NKAD), and 321–323 (SAV). Mg(2+)-binding residues include Ser-173 and Thr-193. The region spanning 358 to 438 (PVISNENSFS…IGNVSFDWEP (81 aa)) is the OCT domain. The interval 462–486 (RIGATERKHASRIRRGLEGLDPEDQ) is disordered.

It belongs to the TRAFAC class OBG-HflX-like GTPase superfamily. OBG GTPase family. Monomer. Requires Mg(2+) as cofactor.

It localises to the cytoplasm. Its function is as follows. An essential GTPase which binds GTP, GDP and possibly (p)ppGpp with moderate affinity, with high nucleotide exchange rates and a fairly low GTP hydrolysis rate. Plays a role in control of the cell cycle, stress response, ribosome biogenesis and in those bacteria that undergo differentiation, in morphogenesis control. The chain is GTPase Obg from Rhodococcus jostii (strain RHA1).